The following is a 502-amino-acid chain: Probable glycine dehydrogenase (decarboxylating) subunit 2 (502 aa).

Lysine 273 carries the N6-(pyridoxal phosphate)lysine modification.

It belongs to the GcvP family. C-terminal subunit subfamily. In terms of assembly, the glycine cleavage system is composed of four proteins: P, T, L and H. In this organism, the P 'protein' is a heterodimer of two subunits. The cofactor is pyridoxal 5'-phosphate.

It carries out the reaction N(6)-[(R)-lipoyl]-L-lysyl-[glycine-cleavage complex H protein] + glycine + H(+) = N(6)-[(R)-S(8)-aminomethyldihydrolipoyl]-L-lysyl-[glycine-cleavage complex H protein] + CO2. In terms of biological role, the glycine cleavage system catalyzes the degradation of glycine. The P protein binds the alpha-amino group of glycine through its pyridoxal phosphate cofactor; CO(2) is released and the remaining methylamine moiety is then transferred to the lipoamide cofactor of the H protein. The chain is Probable glycine dehydrogenase (decarboxylating) subunit 2 from Pyrococcus horikoshii (strain ATCC 700860 / DSM 12428 / JCM 9974 / NBRC 100139 / OT-3).